The primary structure comprises 37 residues: Large ribosomal subunit protein bL36 (37 aa).

This sequence belongs to the bacterial ribosomal protein bL36 family.

This Synechococcus sp. (strain WH7803) protein is Large ribosomal subunit protein bL36.